We begin with the raw amino-acid sequence, 365 residues long: MKNHHYLLLTPGPLTTTKTVKEVMLYDWCTWDTEYNELVQEIRKRLVSLATKEEEYYTTVFMQGSGTFSVESVIGSVIPQEGKLLVCTNGAYGKRIVQIATTLHINVVESYTNEWEPTNLAEVEEILQKDSEITHIAVVHCETTTGIINPIADVCRLGKQYGKVTIVDAMSSFGGVEMDVADLQIDFMISSANKCIQGVPGFGFVIAKRTELEQCKGRARSLSLDLYDQWETMELQNGKWRFTSPTHTVRAFYQALLELEEEGGVKARNTRYRNNQQVLVKRMREVGFEPLLDEAYQSPIITSFLYPGEGFTFQQLYEELKEHGFVIYPGKISKVDTFRIGNIGDVYESDIHQLVDCISEGVVIG.

An N6-(pyridoxal phosphate)lysine modification is found at Lys-194.

The protein belongs to the class-V pyridoxal-phosphate-dependent aminotransferase family. PhnW subfamily. As to quaternary structure, homodimer. It depends on pyridoxal 5'-phosphate as a cofactor.

The enzyme catalyses (2-aminoethyl)phosphonate + pyruvate = phosphonoacetaldehyde + L-alanine. Functionally, involved in phosphonate degradation. The protein is 2-aminoethylphosphonate--pyruvate transaminase of Bacillus cytotoxicus (strain DSM 22905 / CIP 110041 / 391-98 / NVH 391-98).